Reading from the N-terminus, the 362-residue chain is IGEPINERGPIKTKQFAPIHAEAPDFLNMSVDQEILVTGIKVVDLLAPYAKGGKIGLFGGAVVGKTVLIMELINNVAKAHGGYSVFAGVGERTREGNDLYHEMIESGVINLKDATSKVALVYGQMNEPPGARARVALTGLTVAEYFRDQEGQDVLLFIDNIFRFTQAGSEVSALLGRIPSAVGYQPTLATDMGTMQERITTTKKGSITSVQAIYVPADDLTDPAPATTFAHLDATTVLSRAIAELGIYPAVDPLDSTSRIMDPNIVGNEHYDVARGVQKILQDYKSLQDIIAILGMDELSEEDKLTVSRARKIQRFLSQPFQVAEVFTGHMGKLVPLKETIKGFQQMLAGDYDHLPEQAYYI.

Lysine 14 is modified (N6-acetyllysine; alternate). Lysine 14 carries the N6-succinyllysine; alternate modification. At lysine 51 the chain carries N6-acetyllysine. 6 residues coordinate ADP: valine 62, valine 63, glycine 64, lysine 65, threonine 66, and valine 67. ATP is bound at residue valine 62. Residues valine 62, valine 63, glycine 64, lysine 65, and threonine 66 each contribute to the phosphate site. ATP contacts are provided by glycine 64, lysine 65, threonine 66, and valine 67. Position 66 (threonine 66) interacts with Mg(2+). Glutamate 91 lines the Mg(2+) pocket. N6-acetyllysine; alternate occurs at positions 112 and 117. 2 positions are modified to N6-succinyllysine; alternate: lysine 112 and lysine 117. Threonine 165 is modified (phosphothreonine). Lysine 279 carries the post-translational modification N6-acetyllysine. Serine 286 carries the post-translational modification Phosphoserine. N6-acetyllysine is present on residues lysine 333 and lysine 338.

Belongs to the ATPase alpha/beta chains family. As to quaternary structure, homotrimer. Component of the ATP synthase complex composed at least of ATP5F1A/subunit alpha, ATP5F1B/subunit beta, ATP5MC1/subunit c (homooctomer), MT-ATP6/subunit a, MT-ATP8/subunit 8, ATP5ME/subunit e, ATP5MF/subunit f, ATP5MG/subunit g, ATP5MK/subunit k, ATP5MJ/subunit j, ATP5F1C/subunit gamma, ATP5F1D/subunit delta, ATP5F1E/subunit epsilon, ATP5PF/subunit F6, ATP5PB/subunit b, ATP5PD/subunit d, ATP5PO/subunit OSCP. ATP synthase complex consists of a soluble F(1) head domain (subunits alpha(3) and beta(3)) - the catalytic core - and a membrane F(0) domain - the membrane proton channel (subunits c, a, 8, e, f, g, k and j). These two domains are linked by a central stalk (subunits gamma, delta, and epsilon) rotating inside the F1 region and a stationary peripheral stalk (subunits F6, b, d, and OSCP). Interacts with PPIF. Interacts with BCL2L1 isoform BCL-X(L); the interaction mediates the association of BCL2L1 isoform BCL-X(L) with the mitochondrial membrane F(1)F(0) ATP synthase and enhances neurons metabolic efficiency. Interacts with CLN5 and PPT1. Interacts with S100A1; this interaction increases F1-ATPase activity. Interacts with MTLN. Interacts with TTC5/STRAP; the interaction results in decreased mitochondrial ATP production.

It is found in the mitochondrion inner membrane. It catalyses the reaction ATP + H2O + 4 H(+)(in) = ADP + phosphate + 5 H(+)(out). Functionally, catalytic subunit beta, of the mitochondrial membrane ATP synthase complex (F(1)F(0) ATP synthase or Complex V) that produces ATP from ADP in the presence of a proton gradient across the membrane which is generated by electron transport complexes of the respiratory chain. ATP synthase complex consist of a soluble F(1) head domain - the catalytic core - and a membrane F(1) domain - the membrane proton channel. These two domains are linked by a central stalk rotating inside the F(1) region and a stationary peripheral stalk. During catalysis, ATP synthesis in the catalytic domain of F(1) is coupled via a rotary mechanism of the central stalk subunits to proton translocation. In vivo, can only synthesize ATP although its ATP hydrolase activity can be activated artificially in vitro. With the subunit alpha (ATP5F1A), forms the catalytic core in the F(1) domain. This is ATP synthase F(1) complex catalytic subunit beta, mitochondrial from Mesocricetus auratus (Golden hamster).